Consider the following 371-residue polypeptide: Poly(rC)-binding protein 3 (371 aa).

KH domains follow at residues 45 to 95 (TLTI…TITG), 129 to 182 (PVTL…TISG), and 293 to 357 (ASTH…QYLI).

As to expression, widely expressed, with highest levels in testis and fat tissues and lowest in heart.

The protein resides in the cytoplasm. In terms of biological role, single-stranded nucleic acid binding protein that binds preferentially to oligo dC. This Mus musculus (Mouse) protein is Poly(rC)-binding protein 3 (Pcbp3).